Here is a 499-residue protein sequence, read N- to C-terminus: Probable cytosol aminopeptidase (499 aa).

Mn(2+) is bound by residues Lys269 and Asp274. Lys281 is a catalytic residue. 3 residues coordinate Mn(2+): Asp292, Asp351, and Glu353. Arg355 is a catalytic residue.

This sequence belongs to the peptidase M17 family. Mn(2+) serves as cofactor.

Its subcellular location is the cytoplasm. The catalysed reaction is Release of an N-terminal amino acid, Xaa-|-Yaa-, in which Xaa is preferably Leu, but may be other amino acids including Pro although not Arg or Lys, and Yaa may be Pro. Amino acid amides and methyl esters are also readily hydrolyzed, but rates on arylamides are exceedingly low.. It catalyses the reaction Release of an N-terminal amino acid, preferentially leucine, but not glutamic or aspartic acids.. Functionally, presumably involved in the processing and regular turnover of intracellular proteins. Catalyzes the removal of unsubstituted N-terminal amino acids from various peptides. In Actinobacillus pleuropneumoniae serotype 7 (strain AP76), this protein is Probable cytosol aminopeptidase.